Consider the following 244-residue polypeptide: tRNA pseudouridine synthase A (244 aa).

The active-site Nucleophile is the aspartate 52. Tyrosine 110 is a binding site for substrate.

This sequence belongs to the tRNA pseudouridine synthase TruA family. Homodimer.

It carries out the reaction uridine(38/39/40) in tRNA = pseudouridine(38/39/40) in tRNA. In terms of biological role, formation of pseudouridine at positions 38, 39 and 40 in the anticodon stem and loop of transfer RNAs. The chain is tRNA pseudouridine synthase A from Clostridium acetobutylicum (strain ATCC 824 / DSM 792 / JCM 1419 / IAM 19013 / LMG 5710 / NBRC 13948 / NRRL B-527 / VKM B-1787 / 2291 / W).